A 246-amino-acid chain; its full sequence is MyoD family inhibitor domain-containing protein (246 aa).

Positions 1–71 (MSGAGEALAP…WGNPSDGELI (71 aa)) are disordered. Basic and acidic residues predominate over residues 33–43 (KCDKDNTEKDI). Residues 44–63 (TQATNSHFTHGEMQDQSIWG) show a composition bias toward polar residues. An MDFI domain is found at 74–246 (QPQRLPQLQT…MECCGICFPS (173 aa)). 3 positions are modified to phosphoserine: Ser128, Ser140, and Ser143.

The protein belongs to the MDFI family. As to quaternary structure, interacts with HAND1; the interaction sequesters HAND1 into the nucleolus and inhibits its activity. Interacts (via C-terminus) with ZIC2. Interacts (via C-terminus) with AXIN1, the histidine-rich region of CCNT1/cyclin-T and weakly with LEF1. Interacts with CCNT2. Interacts with GATA2. Interacts (via C-terminus) with Piezo channel composed of PIEZO1 or PIEZO2; the interaction prolongs Piezo channel inactivation. In terms of assembly, (Microbial infection) Interacts (via C-terminus) with HIV-1 Tat and Rev. Palmitoylated. In terms of tissue distribution, expressed in lymphatic tissues. Detected in the spleen, thymus, peripheral blood leukocytes as well as prostate, uterus and small intestine. Expressed in lymphatic endothelial cells.

The protein resides in the nucleus. It localises to the nucleolus. The protein localises to the cytoplasm. It is found in the secreted. In terms of biological role, required to control the activity of various transcription factors through their sequestration in the cytoplasm. Retains nuclear Zic proteins ZIC1, ZIC2 and ZIC3 in the cytoplasm and inhibits their transcriptional activation. Modulates the expression from cellular promoters. Binds to the axin complex, resulting in an increase in the level of free beta-catenin. Affects axin regulation of the WNT and JNK signaling pathways. Involved in the development of lymphatic vessel valves. Required to promote lymphatic endothelial cell migration, in a process that involves down-regulation of integrin beta 1 activation and control of cell adhesion to the extracellular matrix. Regulates the activity of mechanosensitive Piezo channel. (Microbial infection) Modulates the expression from viral promoters. Down-regulates Tat-dependent transcription of the human immunodeficiency virus type 1 (HIV-1) LTR by interacting with HIV-1 Tat and Rev and impairing their nuclear import, probably by rendering the NLS domains inaccessible to importin-beta. Also stimulates activation of human T-cell leukemia virus type I (HTLV-I) LTR. This chain is MyoD family inhibitor domain-containing protein, found in Homo sapiens (Human).